The primary structure comprises 104 residues: L-rhamnose mutarotase (104 aa).

Tyr-18 lines the substrate pocket. Catalysis depends on His-22, which acts as the Proton donor. Residues Tyr-41 and 76-77 (WW) contribute to the substrate site.

This sequence belongs to the rhamnose mutarotase family. Homodimer.

It is found in the cytoplasm. The catalysed reaction is alpha-L-rhamnose = beta-L-rhamnose. The protein operates within carbohydrate metabolism; L-rhamnose metabolism. Involved in the anomeric conversion of L-rhamnose. This is L-rhamnose mutarotase from Clostridium beijerinckii (strain ATCC 51743 / NCIMB 8052) (Clostridium acetobutylicum).